Reading from the N-terminus, the 360-residue chain is S-adenosylmethionine:tRNA ribosyltransferase-isomerase (360 aa).

The protein belongs to the QueA family. Monomer.

It is found in the cytoplasm. The enzyme catalyses 7-aminomethyl-7-carbaguanosine(34) in tRNA + S-adenosyl-L-methionine = epoxyqueuosine(34) in tRNA + adenine + L-methionine + 2 H(+). It participates in tRNA modification; tRNA-queuosine biosynthesis. In terms of biological role, transfers and isomerizes the ribose moiety from AdoMet to the 7-aminomethyl group of 7-deazaguanine (preQ1-tRNA) to give epoxyqueuosine (oQ-tRNA). This chain is S-adenosylmethionine:tRNA ribosyltransferase-isomerase, found in Burkholderia pseudomallei (strain 1106a).